A 226-amino-acid polypeptide reads, in one-letter code: PKHD-type hydroxylase PLES_48951 (226 aa).

The Fe2OG dioxygenase domain maps to 78-178; sequence KVFPPLFNCY…RYASFFWTQS (101 aa). Histidine 96, aspartate 98, and histidine 159 together coordinate Fe cation. Position 169 (arginine 169) interacts with 2-oxoglutarate.

The cofactor is Fe(2+). It depends on L-ascorbate as a cofactor.

This is PKHD-type hydroxylase PLES_48951 from Pseudomonas aeruginosa (strain LESB58).